We begin with the raw amino-acid sequence, 252 residues long: Small ribosomal subunit protein uS3 (252 aa).

A KH type-2 domain is found at 39 to 111 (IRKLINNFAK…EVNLNVLEVK (73 aa)). The disordered stretch occupies residues 222 to 252 (KPFASQSSNTPNRRPRNFKGGNNNHVNAKKN). Residues 241 to 252 (GGNNNHVNAKKN) show a composition bias toward polar residues.

It belongs to the universal ribosomal protein uS3 family. In terms of assembly, part of the 30S ribosomal subunit. Forms a tight complex with proteins S10 and S14.

Binds the lower part of the 30S subunit head. Binds mRNA in the 70S ribosome, positioning it for translation. The polypeptide is Small ribosomal subunit protein uS3 (Phytoplasma sp. (strain STRAWB2)).